The chain runs to 83 residues: Large ribosomal subunit protein bL27 (83 aa).

It belongs to the bacterial ribosomal protein bL27 family.

The polypeptide is Large ribosomal subunit protein bL27 (Thermotoga neapolitana (strain ATCC 49049 / DSM 4359 / NBRC 107923 / NS-E)).